The sequence spans 433 residues: Serine--tRNA ligase (433 aa).

An L-serine-binding site is contributed by 235 to 237 (TSE). 266 to 268 (RSE) is a binding site for ATP. Glu-289 lines the L-serine pocket. ATP is bound at residue 353–356 (EISS). Ser-388 provides a ligand contact to L-serine.

This sequence belongs to the class-II aminoacyl-tRNA synthetase family. Type-1 seryl-tRNA synthetase subfamily. In terms of assembly, homodimer. The tRNA molecule binds across the dimer.

Its subcellular location is the cytoplasm. The enzyme catalyses tRNA(Ser) + L-serine + ATP = L-seryl-tRNA(Ser) + AMP + diphosphate + H(+). It carries out the reaction tRNA(Sec) + L-serine + ATP = L-seryl-tRNA(Sec) + AMP + diphosphate + H(+). It participates in aminoacyl-tRNA biosynthesis; selenocysteinyl-tRNA(Sec) biosynthesis; L-seryl-tRNA(Sec) from L-serine and tRNA(Sec): step 1/1. Its function is as follows. Catalyzes the attachment of serine to tRNA(Ser). Is also able to aminoacylate tRNA(Sec) with serine, to form the misacylated tRNA L-seryl-tRNA(Sec), which will be further converted into selenocysteinyl-tRNA(Sec). In Burkholderia vietnamiensis (strain G4 / LMG 22486) (Burkholderia cepacia (strain R1808)), this protein is Serine--tRNA ligase.